An 891-amino-acid polypeptide reads, in one-letter code: Alanine--tRNA ligase (891 aa).

Positions 564, 568, 677, and 681 each coordinate Zn(2+).

This sequence belongs to the class-II aminoacyl-tRNA synthetase family. Zn(2+) serves as cofactor.

The protein localises to the cytoplasm. The catalysed reaction is tRNA(Ala) + L-alanine + ATP = L-alanyl-tRNA(Ala) + AMP + diphosphate. Functionally, catalyzes the attachment of alanine to tRNA(Ala) in a two-step reaction: alanine is first activated by ATP to form Ala-AMP and then transferred to the acceptor end of tRNA(Ala). Also edits incorrectly charged Ser-tRNA(Ala) and Gly-tRNA(Ala) via its editing domain. The protein is Alanine--tRNA ligase of Rhodopseudomonas palustris (strain HaA2).